We begin with the raw amino-acid sequence, 211 residues long: UPF0329 protein ECU07_1880/ECU10_0020 (211 aa).

The protein belongs to the UPF0329 family.

The polypeptide is UPF0329 protein ECU07_1880/ECU10_0020 (Encephalitozoon cuniculi (strain GB-M1) (Microsporidian parasite)).